Reading from the N-terminus, the 138-residue chain is Superoxide dismutase [Mn] (138 aa).

Mn(2+) contacts are provided by Ser1, His49, Asp133, and His137.

The protein belongs to the iron/manganese superoxide dismutase family. Requires Mn(2+) as cofactor.

It carries out the reaction 2 superoxide + 2 H(+) = H2O2 + O2. Its function is as follows. Destroys superoxide anion radicals which are normally produced within the cells and which are toxic to biological systems. The polypeptide is Superoxide dismutase [Mn] (sodA) (Mycobacterium marinum).